Here is a 437-residue protein sequence, read N- to C-terminus: Cobyrinate a,c-diamide synthase (437 aa).

A GATase cobBQ-type domain is found at 243 to 433 (IAAIAYDSAF…SHFHFSSARG (191 aa)). C324 acts as the Nucleophile in catalysis.

The protein belongs to the CobB/CbiA family. The cofactor is Mg(2+).

The enzyme catalyses cob(II)yrinate + 2 L-glutamine + 2 ATP + 2 H2O = cob(II)yrinate a,c diamide + 2 L-glutamate + 2 ADP + 2 phosphate + 2 H(+). The protein operates within cofactor biosynthesis; adenosylcobalamin biosynthesis; cob(II)yrinate a,c-diamide from sirohydrochlorin (anaerobic route): step 10/10. Functionally, catalyzes the ATP-dependent amidation of the two carboxylate groups at positions a and c of cobyrinate, using either L-glutamine or ammonia as the nitrogen source. The polypeptide is Cobyrinate a,c-diamide synthase (Sulfurisphaera tokodaii (strain DSM 16993 / JCM 10545 / NBRC 100140 / 7) (Sulfolobus tokodaii)).